Here is a 213-residue protein sequence, read N- to C-terminus: Probable germin-like protein subfamily 2 member 5 (213 aa).

The first 22 residues, 1 to 22 (MASFATHLVVVVTMLFVAMASA), serve as a signal peptide directing secretion. A disulfide bridge links C29 with C44. The region spanning 58 to 203 (KGLANIAATN…SFQLKHKQVK (146 aa)) is the Cupin type-1 domain. The N-linked (GlcNAc...) asparagine glycan is linked to N67. H106, H108, E113, and H152 together coordinate Mn(2+).

Belongs to the germin family. In terms of assembly, oligomer (believed to be a pentamer but probably hexamer).

The protein resides in the secreted. The protein localises to the extracellular space. Its subcellular location is the apoplast. Functionally, may play a role in plant defense. Probably has no oxalate oxidase activity even if the active site is conserved. This Arabidopsis thaliana (Mouse-ear cress) protein is Probable germin-like protein subfamily 2 member 5.